A 218-amino-acid chain; its full sequence is Ohanin-like protein (218 aa).

Residues 1–40 (MSPSAGFQFSLYFLQTKKVLWKLTGLCYILLFTLCFFADQ) form the signal peptide. Positions 41–48 (ENGGKALA) are excised as a propeptide. One can recognise a B30.2/SPRY domain in the interval 49–155 (SPPGIWKRAD…RIWQTGLWWL (107 aa)). Positions 156–218 (RHLETDPGRV…LGGTVSLTTL (63 aa)) are excised as a propeptide.

It belongs to the ohanin/vespryn family. Expressed by the venom gland.

It localises to the secreted. Functionally, neurotoxin that produces dose-dependent hypolocomotion and hyperalgesia in mice. May directly act on the central nervous system, as it is 6500-fold more potent when administered intracerebroventricularly than intraperitoneal. The sequence is that of Ohanin-like protein from Lachesis muta muta (Bushmaster).